A 602-amino-acid polypeptide reads, in one-letter code: Bifunctional lycopene cyclase/phytoene synthase (602 aa).

The tract at residues 1 to 238 (MLTYMEVHLY…LVFASCATDR (238 aa)) is lycopene beta-cyclase. The next 7 helical transmembrane spans lie at 7–27 (VHLYFTLPVLALLAFLYKPFF), 35–55 (YIFLCTVAFATASPWDNYIVY), 69–89 (VIGYVPLEEYMFFIIMTLITV), 110–130 (PVFQSVCVRYIPIVGFLTIAA), 142–162 (PFYGACILWYVCPVLALLWIG), 173–193 (AVLFSIAVPTIFLCWVDQYAI), and 211–231 (LPSLPLEEFLFFLLIDTVLVF). Residues 245 to 602 (IYITPMNHNK…RGKSQAFTVI (358 aa)) are phytoene synthase.

It in the N-terminal section; belongs to the lycopene beta-cyclase family. In the C-terminal section; belongs to the phytoene/squalene synthase family.

Its subcellular location is the membrane. It catalyses the reaction all-trans-lycopene = gamma-carotene. The catalysed reaction is gamma-carotene = all-trans-beta-carotene. The enzyme catalyses 2 (2E,6E,10E)-geranylgeranyl diphosphate = 15-cis-phytoene + 2 diphosphate. It participates in carotenoid biosynthesis; beta-carotene biosynthesis. Its pathway is carotenoid biosynthesis; phytoene biosynthesis; all-trans-phytoene from geranylgeranyl diphosphate: step 1/1. Functionally, bifunctional enzyme that catalyzes the reactions from geranylgeranyl diphosphate to phytoene (phytoene synthase) and lycopene to beta-carotene via the intermediate gamma-carotene (lycopene cyclase). This chain is Bifunctional lycopene cyclase/phytoene synthase, found in Phycomyces blakesleeanus (strain ATCC 8743b / DSM 1359 / FGSC 10004 / NBRC 33097 / NRRL 1555).